A 70-amino-acid polypeptide reads, in one-letter code: Putative peptide YY-3 (70 aa).

A signal peptide spans 1 to 23 (MVSVCRPWPAVAIALLALLVCLG).

The protein belongs to the NPY family.

It is found in the secreted. This chain is Putative peptide YY-3 (PYY3), found in Homo sapiens (Human).